A 117-amino-acid polypeptide reads, in one-letter code: Photosystem II reaction center Psb28 protein (117 aa).

The protein belongs to the Psb28 family. Part of the photosystem II complex.

Its subcellular location is the cellular thylakoid membrane. The sequence is that of Photosystem II reaction center Psb28 protein from Prochlorococcus marinus (strain MIT 9515).